A 793-amino-acid polypeptide reads, in one-letter code: Probable phosphoketolase (793 aa).

It belongs to the XFP family. Thiamine diphosphate serves as cofactor.

The chain is Probable phosphoketolase from Streptomyces avermitilis (strain ATCC 31267 / DSM 46492 / JCM 5070 / NBRC 14893 / NCIMB 12804 / NRRL 8165 / MA-4680).